Here is a 142-residue protein sequence, read N- to C-terminus: Transcriptional regulator MraZ (142 aa).

2 SpoVT-AbrB domains span residues 5 to 46 and 75 to 118; these read THPV…DRSE and AAAQ…DSEA.

The protein belongs to the MraZ family. Forms oligomers.

Its subcellular location is the cytoplasm. It localises to the nucleoid. This chain is Transcriptional regulator MraZ, found in Tropheryma whipplei (strain TW08/27) (Whipple's bacillus).